A 144-amino-acid polypeptide reads, in one-letter code: D-aminoacyl-tRNA deacylase (144 aa).

The short motif at 136–137 is the Gly-cisPro motif, important for rejection of L-amino acids element; the sequence is GP.

It belongs to the DTD family. In terms of assembly, homodimer.

The protein localises to the cytoplasm. It catalyses the reaction glycyl-tRNA(Ala) + H2O = tRNA(Ala) + glycine + H(+). The catalysed reaction is a D-aminoacyl-tRNA + H2O = a tRNA + a D-alpha-amino acid + H(+). In terms of biological role, an aminoacyl-tRNA editing enzyme that deacylates mischarged D-aminoacyl-tRNAs. Also deacylates mischarged glycyl-tRNA(Ala), protecting cells against glycine mischarging by AlaRS. Acts via tRNA-based rather than protein-based catalysis; rejects L-amino acids rather than detecting D-amino acids in the active site. By recycling D-aminoacyl-tRNA to D-amino acids and free tRNA molecules, this enzyme counteracts the toxicity associated with the formation of D-aminoacyl-tRNA entities in vivo and helps enforce protein L-homochirality. The sequence is that of D-aminoacyl-tRNA deacylase from Aliivibrio fischeri (strain MJ11) (Vibrio fischeri).